A 271-amino-acid polypeptide reads, in one-letter code: Tryptophan synthase alpha chain (271 aa).

Residues Glu49 and Asp60 each act as proton acceptor in the active site.

Belongs to the TrpA family. Tetramer of two alpha and two beta chains.

The catalysed reaction is (1S,2R)-1-C-(indol-3-yl)glycerol 3-phosphate + L-serine = D-glyceraldehyde 3-phosphate + L-tryptophan + H2O. The protein operates within amino-acid biosynthesis; L-tryptophan biosynthesis; L-tryptophan from chorismate: step 5/5. The alpha subunit is responsible for the aldol cleavage of indoleglycerol phosphate to indole and glyceraldehyde 3-phosphate. This Rhizorhabdus wittichii (strain DSM 6014 / CCUG 31198 / JCM 15750 / NBRC 105917 / EY 4224 / RW1) (Sphingomonas wittichii) protein is Tryptophan synthase alpha chain.